The sequence spans 168 residues: ATP synthase subunit b (168 aa).

A helical membrane pass occupies residues 13-33 (WTFLFQTLNLLVVMGLLYVFL).

This sequence belongs to the ATPase B chain family. In terms of assembly, F-type ATPases have 2 components, F(1) - the catalytic core - and F(0) - the membrane proton channel. F(1) has five subunits: alpha(3), beta(3), gamma(1), delta(1), epsilon(1). F(0) has three main subunits: a(1), b(2) and c(10-14). The alpha and beta chains form an alternating ring which encloses part of the gamma chain. F(1) is attached to F(0) by a central stalk formed by the gamma and epsilon chains, while a peripheral stalk is formed by the delta and b chains.

It localises to the cell membrane. Functionally, f(1)F(0) ATP synthase produces ATP from ADP in the presence of a proton or sodium gradient. F-type ATPases consist of two structural domains, F(1) containing the extramembraneous catalytic core and F(0) containing the membrane proton channel, linked together by a central stalk and a peripheral stalk. During catalysis, ATP synthesis in the catalytic domain of F(1) is coupled via a rotary mechanism of the central stalk subunits to proton translocation. Its function is as follows. Component of the F(0) channel, it forms part of the peripheral stalk, linking F(1) to F(0). The chain is ATP synthase subunit b from Moorella thermoacetica (strain ATCC 39073 / JCM 9320).